We begin with the raw amino-acid sequence, 267 residues long: Formamidopyrimidine-DNA glycosylase (267 aa).

Pro-2 functions as the Schiff-base intermediate with DNA in the catalytic mechanism. Glu-3 serves as the catalytic Proton donor. Lys-58 functions as the Proton donor; for beta-elimination activity in the catalytic mechanism. Residues His-91, Arg-110, and Arg-152 each coordinate DNA. An FPG-type zinc finger spans residues 233 to 267 (DVYGRGTDACTRCGGALEEIRLGNRSTVFCPRCQT). Catalysis depends on Arg-257, which acts as the Proton donor; for delta-elimination activity.

The protein belongs to the FPG family. As to quaternary structure, monomer. Zn(2+) serves as cofactor.

The enzyme catalyses Hydrolysis of DNA containing ring-opened 7-methylguanine residues, releasing 2,6-diamino-4-hydroxy-5-(N-methyl)formamidopyrimidine.. It carries out the reaction 2'-deoxyribonucleotide-(2'-deoxyribose 5'-phosphate)-2'-deoxyribonucleotide-DNA = a 3'-end 2'-deoxyribonucleotide-(2,3-dehydro-2,3-deoxyribose 5'-phosphate)-DNA + a 5'-end 5'-phospho-2'-deoxyribonucleoside-DNA + H(+). Functionally, involved in base excision repair of DNA damaged by oxidation or by mutagenic agents. Acts as a DNA glycosylase that recognizes and removes damaged bases. Has a preference for oxidized purines, such as 7,8-dihydro-8-oxoguanine (8-oxoG). Has AP (apurinic/apyrimidinic) lyase activity and introduces nicks in the DNA strand. Cleaves the DNA backbone by beta-delta elimination to generate a single-strand break at the site of the removed base with both 3'- and 5'-phosphates. This Geobacter metallireducens (strain ATCC 53774 / DSM 7210 / GS-15) protein is Formamidopyrimidine-DNA glycosylase.